The sequence spans 179 residues: MAKLHDYYKDEVVKKLMTEFSYNSVMQVPRVEKITLNMGVGEAIADKKLLDNAAADLAAISGQKPFITKARKSVAGFKIRQGYPIGCKVTLRGERMWEFFERLISIAVPRIRDFRGLSAKSFDGRGNYSMGVREQIIFPEIDYDKVDRVRGMDITITTTAKSDDEGRALLAAFNFPFRK.

The protein belongs to the universal ribosomal protein uL5 family. In terms of assembly, part of the 50S ribosomal subunit; part of the 5S rRNA/L5/L18/L25 subcomplex. Contacts the 5S rRNA and the P site tRNA. Forms a bridge to the 30S subunit in the 70S ribosome.

Its function is as follows. This is one of the proteins that bind and probably mediate the attachment of the 5S RNA into the large ribosomal subunit, where it forms part of the central protuberance. In the 70S ribosome it contacts protein S13 of the 30S subunit (bridge B1b), connecting the 2 subunits; this bridge is implicated in subunit movement. Contacts the P site tRNA; the 5S rRNA and some of its associated proteins might help stabilize positioning of ribosome-bound tRNAs. The protein is Large ribosomal subunit protein uL5 of Erwinia tasmaniensis (strain DSM 17950 / CFBP 7177 / CIP 109463 / NCPPB 4357 / Et1/99).